Reading from the N-terminus, the 1119-residue chain is Isoleucine--tRNA ligase (1119 aa).

The segment at 1 to 43 is disordered; that stretch reads MVPRRSRQRPASSCRTAKTARREMPYPLPAPDGQEPEAQPVTP. A 'HIGH' region motif is present at residues 84-94; sequence PFANGLPHYGH. Positions 676-680 match the 'KMSKS' region motif; the sequence is KVSKS. K679 provides a ligand contact to ATP.

This sequence belongs to the class-I aminoacyl-tRNA synthetase family. IleS type 2 subfamily. As to quaternary structure, monomer. Zn(2+) is required as a cofactor.

Its subcellular location is the cytoplasm. The catalysed reaction is tRNA(Ile) + L-isoleucine + ATP = L-isoleucyl-tRNA(Ile) + AMP + diphosphate. In terms of biological role, catalyzes the attachment of isoleucine to tRNA(Ile). As IleRS can inadvertently accommodate and process structurally similar amino acids such as valine, to avoid such errors it has two additional distinct tRNA(Ile)-dependent editing activities. One activity is designated as 'pretransfer' editing and involves the hydrolysis of activated Val-AMP. The other activity is designated 'posttransfer' editing and involves deacylation of mischarged Val-tRNA(Ile). This is Isoleucine--tRNA ligase from Leifsonia xyli subsp. xyli (strain CTCB07).